The chain runs to 205 residues: Small ribosomal subunit protein uS4 (205 aa).

Residues 1–16 are compositionally biased toward basic and acidic residues; sequence MSKRESSKYKIDRRMG. Positions 1 to 46 are disordered; sequence MSKRESSKYKIDRRMGENIWGRPKSPVNRREYGPGQHGQRRKGKLS. The S4 RNA-binding domain occupies 94 to 157; the sequence is SRLDAIVYRA…KQLVIVLEAV (64 aa).

Belongs to the universal ribosomal protein uS4 family. Part of the 30S ribosomal subunit. Contacts protein S5. The interaction surface between S4 and S5 is involved in control of translational fidelity.

One of the primary rRNA binding proteins, it binds directly to 16S rRNA where it nucleates assembly of the body of the 30S subunit. Functionally, with S5 and S12 plays an important role in translational accuracy. This is Small ribosomal subunit protein uS4 from Rhizobium leguminosarum bv. trifolii (strain WSM2304).